Reading from the N-terminus, the 346-residue chain is Biotin synthase (346 aa).

The Radical SAM core domain maps to 38-256 (QQVQVSTLLS…IAVARIMMPT (219 aa)). 3 residues coordinate [4Fe-4S] cluster: Cys-53, Cys-57, and Cys-60. [2Fe-2S] cluster is bound by residues Cys-97, Cys-128, Cys-188, and Arg-260.

Belongs to the radical SAM superfamily. Biotin synthase family. Homodimer. The cofactor is [4Fe-4S] cluster. [2Fe-2S] cluster is required as a cofactor.

It carries out the reaction (4R,5S)-dethiobiotin + (sulfur carrier)-SH + 2 reduced [2Fe-2S]-[ferredoxin] + 2 S-adenosyl-L-methionine = (sulfur carrier)-H + biotin + 2 5'-deoxyadenosine + 2 L-methionine + 2 oxidized [2Fe-2S]-[ferredoxin]. Its pathway is cofactor biosynthesis; biotin biosynthesis; biotin from 7,8-diaminononanoate: step 2/2. Catalyzes the conversion of dethiobiotin (DTB) to biotin by the insertion of a sulfur atom into dethiobiotin via a radical-based mechanism. The protein is Biotin synthase of Citrobacter koseri (strain ATCC BAA-895 / CDC 4225-83 / SGSC4696).